The primary structure comprises 231 residues: Transcriptional regulator NRG1 (231 aa).

At S163 the chain carries Phosphoserine. 2 consecutive C2H2-type zinc fingers follow at residues 174–196 (YICK…NRIH) and 202–226 (HCCP…YRTH).

The protein localises to the nucleus. Functionally, transcriptional repressor involved in regulation of glucose repression. Binds to UAS-1 in the STA1 promoter. The sequence is that of Transcriptional regulator NRG1 (NRG1) from Saccharomyces cerevisiae (strain ATCC 204508 / S288c) (Baker's yeast).